The following is a 524-amino-acid chain: Ankyrin repeat-containing protein At5g02620 (524 aa).

ANK repeat units lie at residues 16–45, 55–84, 90–119, 124–153, 158–187, 192–222, 226–255, and 260–289; these read RDDT…GVEL, SGET…SVLA, NGFD…ELSF, SKTT…DLAA, NGKT…GMVT, KGQT…LINS, KGNT…VSRV, and SGET…QNAR. The next 4 membrane-spanning stretches (helical) occupy residues 349 to 369, 399 to 419, 441 to 461, and 472 to 492; these read AINS…AAIF, FLIF…VVVV, LMWM…FVVV, and VTAI…YWVI. A Phosphoserine modification is found at Ser508.

It localises to the membrane. In Arabidopsis thaliana (Mouse-ear cress), this protein is Ankyrin repeat-containing protein At5g02620.